A 583-amino-acid polypeptide reads, in one-letter code: Radixin (583 aa).

The FERM domain occupies 5-295 (INVRVTTMDA…GNHELYMRRR (291 aa)). A 1,2-diacyl-sn-glycero-3-phospho-(1D-myo-inositol) is bound at residue 60–63 (KLNK). At K83 the chain carries N6-succinyllysine. Position 278 (K278) interacts with a 1,2-diacyl-sn-glycero-3-phospho-(1D-myo-inositol). Disordered stretches follow at residues 310 to 330 (REEK…KKKR), 376 to 407 (DQER…AKQA), and 462 to 526 (ELKT…RVKK). Residues 376-400 (DQERKRAKEEAERLEKERRAAEEAK) are compositionally biased toward basic and acidic residues. Residues 469 to 480 (APPPPPPPPVIP) are compositionally biased toward pro residues. Composition is skewed to basic and acidic residues over residues 483–492 (ENEHDEHDEN) and 506–525 (MNHR…ERVK). A Phosphothreonine; by ROCK2 modification is found at T564.

Binds NHERF1. Interacts with NHERF1, NHERF2, LAYN, MME/NEP and ICAM2. Interacts with CPNE1 (via VWFA domain) and CPNE4 (via VWFA domain). Interacts (via FERM domain) with SPN/CD43 cytoplasmic tail. Interacts with CD44. Interacts with CLIC5; may work together in a complex which also includes EZR and MYO6 to stabilize linkages between the plasma membrane and subjacent actin cytoskeleton at the base of stereocilia. Post-translationally, phosphorylated by tyrosine-protein kinases. Phosphorylation by ROCK2 suppresses the head-to-tail association of the N-terminal and C-terminal halves resulting in an opened conformation which is capable of actin and membrane-binding.

The protein resides in the cell membrane. The protein localises to the cytoplasm. It localises to the cytoskeleton. Its subcellular location is the cleavage furrow. It is found in the cell projection. The protein resides in the microvillus. The protein localises to the stereocilium. Its activity is regulated as follows. A head-to-tail association, of the N-terminal and C-terminal halves results in a closed conformation (inactive form) which is incapable of actin or membrane-binding. Functionally, probably plays a crucial role in the binding of the barbed end of actin filaments to the plasma membrane. The sequence is that of Radixin (RDX) from Homo sapiens (Human).